Reading from the N-terminus, the 576-residue chain is Arginine--tRNA ligase (576 aa).

The 'HIGH' region signature appears at 122-132; it reads PNVAKQMHVGH.

This sequence belongs to the class-I aminoacyl-tRNA synthetase family. In terms of assembly, monomer.

It localises to the cytoplasm. It carries out the reaction tRNA(Arg) + L-arginine + ATP = L-arginyl-tRNA(Arg) + AMP + diphosphate. The protein is Arginine--tRNA ligase of Proteus mirabilis (strain HI4320).